The following is a 1135-amino-acid chain: APC membrane recruitment protein 1 (1135 aa).

The residue at position 1 (Met1) is an N-acetylmethionine. Disordered regions lie at residues 1–115 (METQ…EGTG), 156–308 (AEKF…VGDP), 339–405 (SMTD…EDDD), 447–484 (GLAPGELLTPQSDQQESAPNSDEGYYDSTTPGFEDDSG), 736–764 (NFGGSPRRAYPTYSPPEDPEEEEVEKEGN), 921–948 (LQAQQEDSDEEDEEEEEGEWSRDSPLSL), and 1007–1135 (VPES…NLAK). Positions 10-19 (QAKGAAASGS) are enriched in low complexity. The segment covering 23–35 (QTAEKGAKNKAAE) has biased composition (basic and acidic residues). The segment covering 36–50 (ATEGPTSEPSSSGPG) has biased composition (low complexity). The segment covering 73 to 83 (FGGGRSKGSGK) has biased composition (gly residues). Basic and acidic residues-rich tracts occupy residues 94 to 107 (KTHDGLSEAAHGPE) and 196 to 208 (GPERVRARPHEHV). Positions 238 to 248 (KVSPTPEPSPP) are enriched in pro residues. Residue Ser246 is modified to Phosphoserine. 2 stretches are compositionally biased toward basic and acidic residues: residues 253-262 (MACKDPEKPM) and 282-291 (EEPHSPETGE). The span at 373–405 (ALPDDDDEEEEEEEEVELEEEEEEVKEEEEDDD) shows a compositional bias: acidic residues. Residues 455–466 (TPQSDQQESAPN) show a composition bias toward polar residues. The segment covering 926-938 (EDSDEEDEEEEEG) has biased composition (acidic residues). A compositionally biased stretch (low complexity) spans 1058–1069 (PSCSSSSGGFSP). Over residues 1119-1135 (SLATSYSSTAMNGNLAK) the composition is skewed to polar residues.

Belongs to the Amer family. In terms of assembly, interacts with CTNNB1, AXIN1, LRP6, KEAP1, APC and BTRC. Interacts with SCF (SKP1-CUL1-F-box protein) E3 ubiquitin-protein ligase complexes containing BTRC and/or FBXW11. Identified in the beta-catenin destruction complex containing CTNNB1, APC, AXIN1 and AXIN2. Interacts with WT1. As to expression, detected in fetal and adult kidney, brain and spleen.

It localises to the cytoplasm. The protein resides in the cell membrane. The protein localises to the nucleus. Its function is as follows. Regulator of the canonical Wnt signaling pathway. Acts by specifically binding phosphatidylinositol 4,5-bisphosphate (PtdIns(4,5)P2), translocating to the cell membrane and interacting with key regulators of the canonical Wnt signaling pathway, such as components of the beta-catenin destruction complex. Acts both as a positive and negative regulator of the Wnt signaling pathway, depending on the context: acts as a positive regulator by promoting LRP6 phosphorylation. Also acts as a negative regulator by acting as a scaffold protein for the beta-catenin destruction complex and promoting stabilization of Axin at the cell membrane. Promotes CTNNB1 ubiquitination and degradation. Involved in kidney development. This is APC membrane recruitment protein 1 (AMER1) from Homo sapiens (Human).